The primary structure comprises 409 residues: uncharacterized protein (409 aa).

One can recognise an HTH arsR-type domain in the interval L305 to M409.

This is an uncharacterized protein from Methanocaldococcus jannaschii (strain ATCC 43067 / DSM 2661 / JAL-1 / JCM 10045 / NBRC 100440) (Methanococcus jannaschii).